We begin with the raw amino-acid sequence, 1327 residues long: Myb-like protein O (1327 aa).

Positions 131-142 (NNNINTTNNNNK) are enriched in low complexity. 4 disordered regions span residues 131 to 153 (NNNI…EESN), 263 to 390 (EEED…DESS), 504 to 668 (PPQQ…NHES), and 717 to 770 (KKKK…DNDD). The segment covering 263–283 (EEEDDEDYIPPEEEEDDDEDN) has biased composition (acidic residues). The segment covering 322–353 (YNNTANNINNNNIGDESDNNNNNNNNINNNSN) has biased composition (low complexity). Residues 356–374 (DDDDDDDDDNNDDDDDDND) show a composition bias toward acidic residues. A compositionally biased stretch (low complexity) spans 511–532 (SSSSINSSNTMSSSSSSSSLSK). Basic residues predominate over residues 533–542 (NKLKKKKKEE). Over residues 543 to 554 (KRKEEKRKEEKR) the composition is skewed to basic and acidic residues. Positions 555–577 (KEKKRKKRQSITISKFKKNKKKT) are enriched in basic residues. The segment covering 585–606 (SESDSSSDDSDDSDFYYSDIEE) has biased composition (acidic residues). The segment covering 607-619 (GGGGNGNGSGSGV) has biased composition (gly residues). Residues 624-633 (SDNEEGDSSS) are compositionally biased toward acidic residues. 2 stretches are compositionally biased toward low complexity: residues 646–668 (HTNN…NHES) and 722–732 (QSSSSSSSSTI). Positions 754–770 (NDDEDDNNNNNEDDNDD) are enriched in acidic residues. In terms of domain architecture, HTH myb-type spans 897–953 (NVKLNQLKFTGGEDLLLLMGVKRFGTFNWRIIQKRYFPNKTDDQLFHRYKNLLSHSS). Positions 925–949 (WRIIQKRYFPNKTDDQLFHRYKNLL) form a DNA-binding region, H-T-H motif. The Myb-like 1 domain occupies 959–1010 (KQYLNGAKFTKEEEEKLDGAIKIHGLKWDIISRDYLHWKEPAMLKKFYEKRE). 2 stretches are compositionally biased toward low complexity: residues 1061–1118 (NSTN…NENN) and 1144–1160 (PIIE…ETSP). 2 disordered regions span residues 1061-1122 (NSTN…YEFG) and 1144-1168 (PIIE…PCPI). Residues 1268-1316 (KWTREEDRIILITVKEKGTVDNEIWKSLSDTKIQDKTPDQIMYRYLQLL) form the Myb-like 2 domain.

It localises to the nucleus. In Dictyostelium discoideum (Social amoeba), this protein is Myb-like protein O (mybO).